The following is a 469-amino-acid chain: Probable lysophospholipase BODYGUARD 1 (469 aa).

Residues 1–45 (MGFSRSLNRTVGVFVFFILDIVDFLLCFTYKTLDFFFESEWKPCY) form the signal peptide. C46 is lipidated: N-palmitoyl cysteine. In terms of domain architecture, AB hydrolase-1 spans 185–439 (VVFIHGFLSS…IHVVPDKDHI (255 aa)). Residue H189 is part of the active site. S263 functions as the Nucleophile in the catalytic mechanism. Catalysis depends on charge relay system residues D410 and H438.

In terms of tissue distribution, expressed exclusively in protodermal and epidermal cells of all organs, especially on adaxial sides.

It is found in the cell membrane. It localises to the secreted. Its subcellular location is the cell wall. Controls cuticle development and morphogenesis, by promoting cutin and suberin monomers loading. Involved in the regulation of abscissic acid (ABA) biosynthesis in response to osmotic stress. Plays an important role in osmotic stress and drought resistance. Required to ensure a reduced permeability of aerial tissue, thus preventing transpiration. Regulates lateral root hair development. Its function is as follows. Required for infection by the pathogenic necrotrophic fungus Botrytis cinerea, probably by regulating structural traits of the cuticle. This Arabidopsis thaliana (Mouse-ear cress) protein is Probable lysophospholipase BODYGUARD 1.